A 233-amino-acid chain; its full sequence is MADS-box transcription factor 56 (233 aa).

Residues M1–P61 enclose the MADS-box domain. The K-box domain occupies I87–A177.

Its subcellular location is the nucleus. Functionally, probable transcription factor. This chain is MADS-box transcription factor 56 (MADS56), found in Oryza sativa subsp. indica (Rice).